The primary structure comprises 73 residues: Beta-defensin 39 (73 aa).

Positions 1–23 (MKISCFLLLVLSLSCFQINSVSG) are cleaved as a signal peptide. Cystine bridges form between Cys29-Cys58, Cys36-Cys51, and Cys41-Cys59.

Belongs to the beta-defensin family.

The protein localises to the secreted. Functionally, has antibacterial activity. The chain is Beta-defensin 39 (Defb39) from Rattus norvegicus (Rat).